The sequence spans 91 residues: MNPFKWLIILPVRFYQLFISPILGPRCRFYPTCSHYTIEAVQQHGVFCGLWLAIKRIAKCHPGNPGGVDPVPSCGCHSDKETTPKEKSDNA.

The segment at 66–91 (GGVDPVPSCGCHSDKETTPKEKSDNA) is disordered. Over residues 77 to 91 (HSDKETTPKEKSDNA) the composition is skewed to basic and acidic residues.

The protein belongs to the UPF0161 family.

The protein resides in the cell inner membrane. Functionally, could be involved in insertion of integral membrane proteins into the membrane. This Hydrogenovibrio crunogenus (strain DSM 25203 / XCL-2) (Thiomicrospira crunogena) protein is Putative membrane protein insertion efficiency factor.